We begin with the raw amino-acid sequence, 389 residues long: Aspartyl protease UND (389 aa).

An N-terminal signal peptide occupies residues 1–19; sequence MKTTMNFVFLFFLPLLINA. Positions 58-383 constitute a Peptidase A1 domain; the sequence is FMAEIHFGSP…DLSAKTAYIN (326 aa). Aspartate 76 is a catalytic residue. A disulfide bridge connects residues cysteine 86 and cysteine 92. Asparagine 238 carries an N-linked (GlcNAc...) asparagine glycan. Aspartate 268 is an active-site residue. Cysteine 304 and cysteine 346 form a disulfide bridge.

It belongs to the peptidase A1 family.

In terms of biological role, probable aspartic protease activated by the transcription factor MYB80. May participate in the regulation of the timing of tapetal programmed cell death (PCD) which is critical for pollen development. In Arabidopsis thaliana (Mouse-ear cress), this protein is Aspartyl protease UND.